The following is a 118-amino-acid chain: UPF0329 protein ECU03_0030/ECU05_0040/ECU06_0010/ECU06_1710/ECU11_0010 (118 aa).

Belongs to the UPF0329 family.

In Encephalitozoon cuniculi (strain GB-M1) (Microsporidian parasite), this protein is UPF0329 protein ECU03_0030/ECU05_0040/ECU06_0010/ECU06_1710/ECU11_0010.